The following is a 331-amino-acid chain: 5,10-methylenetetrahydromethanopterin reductase (331 aa).

Belongs to the mer family.

It localises to the cytoplasm. It carries out the reaction 5-methyl-5,6,7,8-tetrahydromethanopterin + oxidized coenzyme F420-(gamma-L-Glu)(n) + H(+) = 5,10-methylenetetrahydromethanopterin + reduced coenzyme F420-(gamma-L-Glu)(n). The protein operates within one-carbon metabolism; methanogenesis from CO(2); methyl-coenzyme M from 5,10-methylene-5,6,7,8-tetrahydromethanopterin: step 1/2. Functionally, catalyzes the reversible reduction of methylene-H(4)MPT to methyl-H(4)MPT. The polypeptide is 5,10-methylenetetrahydromethanopterin reductase (Methanocaldococcus jannaschii (strain ATCC 43067 / DSM 2661 / JAL-1 / JCM 10045 / NBRC 100440) (Methanococcus jannaschii)).